The chain runs to 96 residues: Small ribosomal subunit protein uS19 (96 aa).

It belongs to the universal ribosomal protein uS19 family.

In terms of biological role, protein S19 forms a complex with S13 that binds strongly to the 16S ribosomal RNA. The sequence is that of Small ribosomal subunit protein uS19 from Solibacter usitatus (strain Ellin6076).